The following is a 98-amino-acid chain: Large ribosomal subunit protein uL23 (98 aa).

Belongs to the universal ribosomal protein uL23 family. In terms of assembly, part of the 50S ribosomal subunit. Contacts protein L29, and trigger factor when it is bound to the ribosome.

Functionally, one of the early assembly proteins it binds 23S rRNA. One of the proteins that surrounds the polypeptide exit tunnel on the outside of the ribosome. Forms the main docking site for trigger factor binding to the ribosome. In Parafrankia sp. (strain EAN1pec), this protein is Large ribosomal subunit protein uL23.